We begin with the raw amino-acid sequence, 950 residues long: Serine/threonine-protein kinase 10-A (950 aa).

A Protein kinase domain is found at 36-294 (WEIIGELGDG…AAQLLEHPFV (259 aa)). ATP-binding positions include 42 to 50 (LGDGAFGKV) and lysine 65. Aspartate 157 acts as the Proton acceptor in catalysis. Acidic residues predominate over residues 319 to 331 (EEQGEAEEEEDSD). The interval 319 to 478 (EEQGEAEEEE…DSGSNSASES (160 aa)) is disordered. The segment covering 347 to 356 (EIGKDIEREQ) has biased composition (basic and acidic residues). Polar residues predominate over residues 365–382 (SATSPQKTDSQADNYSQR). Residues 416-432 (EPKRNSTAESYRGEEHS) show a composition bias toward basic and acidic residues. Low complexity predominate over residues 433–445 (SASSQRQRSAQSA). Positions 452 to 463 (SFDSPTRYFTNW) are enriched in polar residues. Residues serine 482, serine 486, and serine 490 each carry the phosphoserine; by PLK1 modification. The stretch at 634 to 786 (IKFLEQLKLR…QLRLRQQQEK (153 aa)) forms a coiled coil.

It belongs to the protein kinase superfamily. STE Ser/Thr protein kinase family. STE20 subfamily. Homodimer. Autophosphorylates. Phosphorylated by plk1/plx1, suggesting the existence of a feedback loop with plk1/plx1. activation of the protein.

It is found in the cell membrane. It catalyses the reaction L-seryl-[protein] + ATP = O-phospho-L-seryl-[protein] + ADP + H(+). It carries out the reaction L-threonyl-[protein] + ATP = O-phospho-L-threonyl-[protein] + ADP + H(+). Functionally, may act as a polo kinase kinase by mediating phosphorylation of plk1/plx1 and subsequent activation of plk1/plx1 during oocyte maturation. The chain is Serine/threonine-protein kinase 10-A (stk10-a) from Xenopus laevis (African clawed frog).